We begin with the raw amino-acid sequence, 759 residues long: Phosphoribosylformylglycinamidine synthase subunit PurL (759 aa).

Residue H34 is part of the active site. Y37 serves as a coordination point for ATP. E95 is a binding site for Mg(2+). Substrate is bound by residues S96 to H99 and R118. H97 functions as the Proton acceptor in the catalytic mechanism. Position 119 (D119) interacts with Mg(2+). Position 243 (Q243) interacts with substrate. Position 271 (D271) interacts with Mg(2+). Residue E315–Q317 participates in substrate binding. Residues D388–V422 form a disordered region. Residues D520 and G557 each contribute to the ATP site. Residue N558 coordinates Mg(2+). S560 is a substrate binding site.

This sequence belongs to the FGAMS family. As to quaternary structure, monomer. Part of the FGAM synthase complex composed of 1 PurL, 1 PurQ and 2 PurS subunits.

The protein localises to the cytoplasm. The enzyme catalyses N(2)-formyl-N(1)-(5-phospho-beta-D-ribosyl)glycinamide + L-glutamine + ATP + H2O = 2-formamido-N(1)-(5-O-phospho-beta-D-ribosyl)acetamidine + L-glutamate + ADP + phosphate + H(+). The protein operates within purine metabolism; IMP biosynthesis via de novo pathway; 5-amino-1-(5-phospho-D-ribosyl)imidazole from N(2)-formyl-N(1)-(5-phospho-D-ribosyl)glycinamide: step 1/2. Its function is as follows. Part of the phosphoribosylformylglycinamidine synthase complex involved in the purines biosynthetic pathway. Catalyzes the ATP-dependent conversion of formylglycinamide ribonucleotide (FGAR) and glutamine to yield formylglycinamidine ribonucleotide (FGAM) and glutamate. The FGAM synthase complex is composed of three subunits. PurQ produces an ammonia molecule by converting glutamine to glutamate. PurL transfers the ammonia molecule to FGAR to form FGAM in an ATP-dependent manner. PurS interacts with PurQ and PurL and is thought to assist in the transfer of the ammonia molecule from PurQ to PurL. This chain is Phosphoribosylformylglycinamidine synthase subunit PurL, found in Halorubrum lacusprofundi (strain ATCC 49239 / DSM 5036 / JCM 8891 / ACAM 34).